A 343-amino-acid polypeptide reads, in one-letter code: Biotin synthase (343 aa).

The region spanning 36 to 254 is the Radical SAM core domain; it reads RQVQVSTLLS…IAVARIMMPR (219 aa). The [4Fe-4S] cluster site is built by Cys51, Cys55, and Cys58. Residues Cys95, Cys126, Cys186, and Arg258 each coordinate [2Fe-2S] cluster.

The protein belongs to the radical SAM superfamily. Biotin synthase family. Homodimer. The cofactor is [4Fe-4S] cluster. It depends on [2Fe-2S] cluster as a cofactor.

The enzyme catalyses (4R,5S)-dethiobiotin + (sulfur carrier)-SH + 2 reduced [2Fe-2S]-[ferredoxin] + 2 S-adenosyl-L-methionine = (sulfur carrier)-H + biotin + 2 5'-deoxyadenosine + 2 L-methionine + 2 oxidized [2Fe-2S]-[ferredoxin]. The protein operates within cofactor biosynthesis; biotin biosynthesis; biotin from 7,8-diaminononanoate: step 2/2. Catalyzes the conversion of dethiobiotin (DTB) to biotin by the insertion of a sulfur atom into dethiobiotin via a radical-based mechanism. This is Biotin synthase from Erwinia tasmaniensis (strain DSM 17950 / CFBP 7177 / CIP 109463 / NCPPB 4357 / Et1/99).